A 461-amino-acid polypeptide reads, in one-letter code: L-serine dehydratase (461 aa).

It belongs to the iron-sulfur dependent L-serine dehydratase family. [4Fe-4S] cluster serves as cofactor.

It carries out the reaction L-serine = pyruvate + NH4(+). The protein operates within carbohydrate biosynthesis; gluconeogenesis. The polypeptide is L-serine dehydratase (sdaA) (Mycobacterium bovis (strain ATCC BAA-935 / AF2122/97)).